The primary structure comprises 102 residues: Defensin (102 aa).

Positions 1-25 (MKCATIVCTIAVVLAATLLNGSVQA) are cleaved as a signal peptide. The propeptide occupies 26–62 (APQEEAALSGGANLNTLLDELPEETHHAALENYRAKR). 3 cysteine pairs are disulfide-bonded: Cys65–Cys92, Cys78–Cys98, and Cys82–Cys100.

It belongs to the invertebrate defensin family. Type 1 subfamily.

The protein localises to the secreted. Responsible for the anti Gram-positive activity of immune hemolymph. This chain is Defensin (Def1), found in Anopheles gambiae (African malaria mosquito).